The sequence spans 337 residues: o-succinylbenzoate synthase (337 aa).

Catalysis depends on K142, which acts as the Proton donor. Mg(2+) contacts are provided by D170, E199, and D222. K248 serves as the catalytic Proton acceptor.

This sequence belongs to the mandelate racemase/muconate lactonizing enzyme family. MenC type 1 subfamily. Requires a divalent metal cation as cofactor.

The catalysed reaction is (1R,6R)-6-hydroxy-2-succinyl-cyclohexa-2,4-diene-1-carboxylate = 2-succinylbenzoate + H2O. Its pathway is quinol/quinone metabolism; 1,4-dihydroxy-2-naphthoate biosynthesis; 1,4-dihydroxy-2-naphthoate from chorismate: step 4/7. The protein operates within quinol/quinone metabolism; menaquinone biosynthesis. In terms of biological role, converts 2-succinyl-6-hydroxy-2,4-cyclohexadiene-1-carboxylate (SHCHC) to 2-succinylbenzoate (OSB). This Pasteurella multocida (strain Pm70) protein is o-succinylbenzoate synthase.